The following is a 413-amino-acid chain: 2,3-bisphosphoglycerate-independent phosphoglycerate mutase (413 aa).

It belongs to the BPG-independent phosphoglycerate mutase family. A-PGAM subfamily.

It catalyses the reaction (2R)-2-phosphoglycerate = (2R)-3-phosphoglycerate. It participates in carbohydrate degradation; glycolysis; pyruvate from D-glyceraldehyde 3-phosphate: step 3/5. Its function is as follows. Catalyzes the interconversion of 2-phosphoglycerate and 3-phosphoglycerate. The chain is 2,3-bisphosphoglycerate-independent phosphoglycerate mutase from Sulfolobus acidocaldarius (strain ATCC 33909 / DSM 639 / JCM 8929 / NBRC 15157 / NCIMB 11770).